Reading from the N-terminus, the 450-residue chain is tRNA modification GTPase MnmE (450 aa).

3 residues coordinate (6S)-5-formyl-5,6,7,8-tetrahydrofolate: Arg23, Glu81, and Lys120. Residues 216–373 (GIHLVLAGKP…LLKKIATLAG (158 aa)) form the TrmE-type G domain. Residues 226–231 (NAGKSS), 245–251 (TPQAGTT), 270–273 (DTAG), and 337–340 (NKAD) contribute to the GTP site. Residues Ser230 and Thr251 each coordinate Mg(2+). Lys450 provides a ligand contact to (6S)-5-formyl-5,6,7,8-tetrahydrofolate.

This sequence belongs to the TRAFAC class TrmE-Era-EngA-EngB-Septin-like GTPase superfamily. TrmE GTPase family. As to quaternary structure, homodimer. Heterotetramer of two MnmE and two MnmG subunits. Requires K(+) as cofactor.

It localises to the cytoplasm. Exhibits a very high intrinsic GTPase hydrolysis rate. Involved in the addition of a carboxymethylaminomethyl (cmnm) group at the wobble position (U34) of certain tRNAs, forming tRNA-cmnm(5)s(2)U34. In Dichelobacter nodosus (strain VCS1703A), this protein is tRNA modification GTPase MnmE.